The chain runs to 595 residues: Actin-histidine N-methyltransferase (595 aa).

Residues 1–22 (MGKKSRVKTQKSGTGATATVSP) form a disordered region. Residues 10-20 (QKSGTGATATV) show a composition bias toward polar residues. Residues R75, 104-106 (EGF), R254, 275-279 (DMCNH), and 325-327 (SGF) each bind S-adenosyl-L-methionine. In terms of domain architecture, SET spans 94 to 314 (EGFEMVNFKE…AGEQIYIFYG (221 aa)). S513 is modified (phosphoserine). Polar residues predominate over residues 549–563 (ENGLVNGENSIPNGT). The disordered stretch occupies residues 549–595 (ENGLVNGENSIPNGTRSEDENLNQEESKRAVEDAKGSSSDRADAVKE). Positions 573–595 (EESKRAVEDAKGSSSDRADAVKE) are enriched in basic and acidic residues.

This sequence belongs to the class V-like SAM-binding methyltransferase superfamily. SETD3 actin-histidine methyltransferase family. As to quaternary structure, interacts with MYOD1. Post-translationally, phosphorylated by GSK3B, which is required for recognition by the SCF(FBXW7) complex and subsequent degradation. Ubiquitinated by the SCF(FBXW7) complex following phosphorylation by GSK3B, leading to its degradation by the proteasome.

It localises to the cytoplasm. Its subcellular location is the nucleus. It catalyses the reaction L-histidyl-[protein] + S-adenosyl-L-methionine = N(tele)-methyl-L-histidyl-[protein] + S-adenosyl-L-homocysteine + H(+). Functionally, protein-histidine N-methyltransferase that specifically mediates 3-methylhistidine (tele-methylhistidine) methylation of actin at 'His-73'. Histidine methylation of actin is required for smooth muscle contraction of the laboring uterus during delivery. Does not have protein-lysine N-methyltransferase activity and probably only catalyzes histidine methylation of actin. The sequence is that of Actin-histidine N-methyltransferase from Callithrix jacchus (White-tufted-ear marmoset).